The sequence spans 156 residues: Transcription elongation factor GreA (156 aa).

Residues 1 to 32 adopt a coiled-coil conformation; sequence MKKVRLTREGYEKLKKELEDLKRKFMYEISER.

It belongs to the GreA/GreB family.

Its function is as follows. Necessary for efficient RNA polymerase transcription elongation past template-encoded arresting sites. The arresting sites in DNA have the property of trapping a certain fraction of elongating RNA polymerases that pass through, resulting in locked ternary complexes. Cleavage of the nascent transcript by cleavage factors such as GreA or GreB allows the resumption of elongation from the new 3'terminus. GreA releases sequences of 2 to 3 nucleotides. This Thermotoga maritima (strain ATCC 43589 / DSM 3109 / JCM 10099 / NBRC 100826 / MSB8) protein is Transcription elongation factor GreA.